The chain runs to 51 residues: uncharacterized protein (51 aa).

The chain crosses the membrane as a helical span at residues 10–29; the sequence is LFLYHPLFLLLLYIYLVLFI.

It is found in the plastid. Its subcellular location is the chloroplast membrane. This is an uncharacterized protein from Anthoceros angustus (Hornwort).